Here is a 471-residue protein sequence, read N- to C-terminus: tRNA(Ile)-lysidine synthase (471 aa).

35 to 40 lines the ATP pocket; sequence SGGADS.

The protein belongs to the tRNA(Ile)-lysidine synthase family.

It is found in the cytoplasm. It catalyses the reaction cytidine(34) in tRNA(Ile2) + L-lysine + ATP = lysidine(34) in tRNA(Ile2) + AMP + diphosphate + H(+). In terms of biological role, ligates lysine onto the cytidine present at position 34 of the AUA codon-specific tRNA(Ile) that contains the anticodon CAU, in an ATP-dependent manner. Cytidine is converted to lysidine, thus changing the amino acid specificity of the tRNA from methionine to isoleucine. The chain is tRNA(Ile)-lysidine synthase from Geobacter sulfurreducens (strain ATCC 51573 / DSM 12127 / PCA).